Consider the following 179-residue polypeptide: Replication restart protein DnaT (179 aa).

The segment at 156–179 (GGLPKRDVNTVSEPDSQIPPGFRG) is disordered.

This sequence belongs to the DnaT family. As to quaternary structure, homooligomerizes. Interacts with PriB. Component of the replication restart primosome. Primosome assembly occurs via a 'hand-off' mechanism. PriA binds to replication forks, subsequently PriB then DnaT bind; DnaT then displaces ssDNA to generate the helicase loading substrate.

Its function is as follows. Involved in the restart of stalled replication forks, which reloads the replicative helicase on sites other than the origin of replication. Can function in multiple replication restart pathways. Displaces ssDNA from a PriB-ssDNA complex. Probably forms a spiral filament on ssDNA. The polypeptide is Replication restart protein DnaT (Escherichia coli O7:K1 (strain IAI39 / ExPEC)).